The sequence spans 209 residues: Probable chalcone--flavanone isomerase 3 (209 aa).

This sequence belongs to the chalcone isomerase family.

The catalysed reaction is a chalcone = a flavanone.. It functions in the pathway secondary metabolite biosynthesis; flavonoid biosynthesis. In terms of biological role, involved in anthocyanin biosynthesis. In Arabidopsis thaliana (Mouse-ear cress), this protein is Probable chalcone--flavanone isomerase 3 (CHI3).